The primary structure comprises 150 residues: Transcriptional repressor NrdR (150 aa).

A zinc finger spans residues 3-34; that stretch reads CPFCGYEDTFVIDTREIEDQKVIRRRRECPNC. The ATP-cone domain maps to 49–139; sequence IMVIKKDGRR…VYQEFSSLEE (91 aa).

This sequence belongs to the NrdR family. Zn(2+) serves as cofactor.

In terms of biological role, negatively regulates transcription of bacterial ribonucleotide reductase nrd genes and operons by binding to NrdR-boxes. The polypeptide is Transcriptional repressor NrdR (Dictyoglomus turgidum (strain DSM 6724 / Z-1310)).